The sequence spans 171 residues: Endoribonuclease YbeY (171 aa).

Zn(2+) is bound by residues H130, H134, and H140.

Belongs to the endoribonuclease YbeY family. It depends on Zn(2+) as a cofactor.

The protein localises to the cytoplasm. Single strand-specific metallo-endoribonuclease involved in late-stage 70S ribosome quality control and in maturation of the 3' terminus of the 16S rRNA. This chain is Endoribonuclease YbeY, found in Neisseria meningitidis serogroup A / serotype 4A (strain DSM 15465 / Z2491).